Here is a 1500-residue protein sequence, read N- to C-terminus: Carbamoyl-phosphate synthase [ammonia], mitochondrial (1500 aa).

Residues 1-38 (MTRILTACKVVKTLKSGFGFANVTTKRQWDFSRPGIRL) constitute a mitochondrion transit peptide. An anthranilate phosphoribosyltransferase homolog region spans residues 39–218 (LSVKAKTAHI…VKVFGKGNPT (180 aa)). N6-acetyllysine; alternate occurs at positions 44, 55, 57, and 119. Residues Lys44, Lys55, Lys57, and Lys119 each carry the N6-succinyllysine; alternate modification. Lys55 is subject to N6-glutaryllysine; alternate. Residue Ser148 is modified to Phosphoserine. N6-acetyllysine; alternate occurs at positions 157 and 171. Lys157 is subject to N6-succinyllysine; alternate. The residue at position 171 (Lys171) is an N6-glutaryllysine; alternate. An N6-glutaryllysine modification is found at Lys176. Lys182 carries the N6-acetyllysine modification. Position 189 is a phosphoserine (Ser189). An N6-acetyllysine modification is found at Lys197. N6-acetyllysine; alternate is present on residues Lys207, Lys210, Lys214, Lys219, and Lys228. Lys207 carries the post-translational modification N6-succinyllysine; alternate. An N6-glutaryllysine; alternate mark is found at Lys207, Lys210, Lys214, Lys219, and Lys228. At Lys214 the chain carries N6-succinyllysine; alternate. Residues 219-404 (KVVAVDCGIK…FSLIKKGKGT (186 aa)) enclose the Glutamine amidotransferase type-1 domain. Lys237 carries the post-translational modification N6-glutaryllysine. Lys279 carries the N6-acetyllysine modification. Residues Lys280, Lys287, Lys307, and Lys310 each carry the N6-acetyllysine; alternate modification. Residue Lys280 is modified to N6-glutaryllysine; alternate. Residues Lys287 and Lys307 each carry the N6-succinyllysine; alternate modification. Lys307 and Lys310 each carry N6-glutaryllysine; alternate. N6-succinyllysine is present on Lys400. 2 positions are modified to N6-succinyllysine; alternate: Lys402 and Lys412. 4 positions are modified to N6-glutaryllysine; alternate: Lys402, Lys412, Lys453, and Lys458. N6-acetyllysine; alternate is present on residues Lys412, Lys453, Lys458, Lys522, Lys527, and Lys532. An N6-succinyllysine; alternate mark is found at Lys458, Lys522, and Lys527. Residues Lys527 and Lys532 each carry the N6-glutaryllysine; alternate modification. Ser537 is modified (phosphoserine; alternate). Residue Ser537 is glycosylated (O-linked (GlcNAc) serine; alternate). A Phosphoserine modification is found at Ser540. Residues 551–743 (SDKLNEINEK…LAFIAAKIAL (193 aa)) enclose the ATP-grasp 1 domain. 2 positions are modified to N6-acetyllysine; alternate: Lys553 and Lys560. N6-succinyllysine; alternate is present on residues Lys553 and Lys560. Lys553 carries the N6-glutaryllysine; alternate modification. A Phosphoserine modification is found at Ser569. N6-acetyllysine; alternate is present on residues Lys575, Lys603, and Lys612. Residues Lys575, Lys603, and Lys612 each carry the N6-succinyllysine; alternate modification. Lys630 bears the N6-acetyllysine mark. Lys728 carries the post-translational modification N6-glutaryllysine. Residues Lys751, Lys757, Lys772, Lys793, Lys811, Lys831, Lys840, Lys841, Lys856, Lys875, Lys889, and Lys892 each carry the N6-acetyllysine; alternate modification. N6-succinyllysine; alternate is present on residues Lys751 and Lys757. Lys757, Lys772, Lys793, and Lys811 each carry N6-glutaryllysine; alternate. Lys793 carries the post-translational modification N6-succinyllysine; alternate. An N6-succinyllysine; alternate mark is found at Lys831 and Lys840. N6-glutaryllysine; alternate is present on residues Lys841, Lys856, Lys875, Lys889, and Lys892. Residues Lys875, Lys889, and Lys892 each carry the N6-succinyllysine; alternate modification. Phosphoserine occurs at positions 896 and 898. 3 positions are modified to N6-acetyllysine; alternate: Lys908, Lys915, and Lys919. N6-glutaryllysine; alternate is present on residues Lys908, Lys915, and Lys919. Residues Lys915 and Lys919 each carry the N6-succinyllysine; alternate modification. Lys935 is modified (N6-acetyllysine). At Ser1036 the chain carries Phosphoserine. Position 1074 is an N6-acetyllysine; alternate (Lys1074). N6-succinyllysine; alternate is present on Lys1074. An N6-glutaryllysine; alternate modification is found at Lys1074. A phosphoserine mark is found at Ser1079, Ser1090, and Ser1093. Positions 1093–1284 (SAVLDELKVA…FIDVATKVMI (192 aa)) constitute an ATP-grasp 2 domain. Lys1100 carries the post-translational modification N6-acetyllysine; alternate. The residue at position 1100 (Lys1100) is an N6-succinyllysine; alternate. Lys1149 is modified (N6-succinyllysine). Residues Lys1168 and Lys1183 each carry the N6-acetyllysine; alternate modification. Lys1168 and Lys1183 each carry N6-succinyllysine; alternate. 2 positions are modified to N6-glutaryllysine; alternate: Lys1168 and Lys1183. Ser1203 bears the Phosphoserine mark. Position 1222 is an N6-acetyllysine (Lys1222). At Lys1224 the chain carries N6-glutaryllysine. An N6-acetyllysine; alternate mark is found at Lys1232, Lys1269, and Lys1291. Lys1232, Lys1269, and Lys1291 each carry N6-succinyllysine; alternate. O-linked (GlcNAc) serine glycosylation occurs at Ser1331. O-linked (GlcNAc) threonine glycosylation is present at Thr1332. One can recognise an MGS-like domain in the interval 1355-1500 (FKIPQKGILI…YRQYSAGKAA (146 aa)). An N6-acetyllysine; alternate modification is found at Lys1356. Lys1356 and Lys1360 each carry N6-succinyllysine; alternate. N6-glutaryllysine; alternate occurs at positions 1356 and 1360. The N-acetyl-L-glutamate site is built by Thr1391, Thr1394, and Trp1410. 2 positions are modified to phosphoserine: Ser1419 and Ser1431. 2 residues coordinate N-acetyl-L-glutamate: Asn1437 and Asn1440. At Lys1444 the chain carries N6-acetyllysine; alternate. An N6-succinyllysine; alternate modification is found at Lys1444. Asn1449 contacts N-acetyl-L-glutamate. An N6-acetyllysine; alternate mark is found at Lys1471, Lys1479, and Lys1486. An N6-succinyllysine; alternate mark is found at Lys1471, Lys1479, and Lys1486. N6-glutaryllysine; alternate is present on residues Lys1479 and Lys1486.

As to quaternary structure, can form homooligomers (monomers as predominant form and dimers). In terms of assembly, (Microbial infection) Interacts with P.berghei (ANKA strain) phospholipid scramblase PLSCR; the interaction is involved in the interaction between parasite sporozoites and host hepatocytes. Post-translationally, undergoes proteolytic cleavage in the C-terminal region corresponding to the loss of approximately 12 AA residues from the C-terminus. In terms of processing, acetylation of Lys-287, Lys-603, Lys-841 and Lys-1291 is observed in liver mitochondria from fasted mice but not from fed mice. Succinylated at Lys-44, Lys-287 and Lys-1291. Desuccinylated at Lys-1291 by SIRT5, leading to activation. Post-translationally, glutarylated. Glutarylation levels increase during fasting. Deglutarylated by SIRT5 at Lys-55, Lys-219, Lys-412, Lys-889, Lys-892, Lys-915, Lys-1360 and Lys-1486, leading to activation. In terms of tissue distribution, expressed in hepatocytes (at protein level).

It localises to the mitochondrion. The protein localises to the nucleus. Its subcellular location is the nucleolus. The protein resides in the cell membrane. The enzyme catalyses hydrogencarbonate + NH4(+) + 2 ATP = carbamoyl phosphate + 2 ADP + phosphate + 2 H(+). Requires N-acetyl-L-glutamate (NAG) as an allosteric activator. In terms of biological role, involved in the urea cycle of ureotelic animals where the enzyme plays an important role in removing excess ammonia from the cell. This is Carbamoyl-phosphate synthase [ammonia], mitochondrial (Cps1) from Mus musculus (Mouse).